The chain runs to 235 residues: Aspartate/glutamate leucyltransferase (235 aa).

This sequence belongs to the R-transferase family. Bpt subfamily.

It is found in the cytoplasm. It catalyses the reaction N-terminal L-glutamyl-[protein] + L-leucyl-tRNA(Leu) = N-terminal L-leucyl-L-glutamyl-[protein] + tRNA(Leu) + H(+). The enzyme catalyses N-terminal L-aspartyl-[protein] + L-leucyl-tRNA(Leu) = N-terminal L-leucyl-L-aspartyl-[protein] + tRNA(Leu) + H(+). Its function is as follows. Functions in the N-end rule pathway of protein degradation where it conjugates Leu from its aminoacyl-tRNA to the N-termini of proteins containing an N-terminal aspartate or glutamate. The sequence is that of Aspartate/glutamate leucyltransferase from Pseudomonas putida (strain GB-1).